Reading from the N-terminus, the 645-residue chain is Envelope glycoprotein (645 aa).

The signal sequence occupies residues 1 to 36 (MEGPTHPKPFKDKTFSWDLIILVGVVRVLLRLDVGM). Over 37–589 (ANPSPHQVYN…FNKSPWFTTL (553 aa)) the chain is Extracellular. N-linked (GlcNAc...) asparagine; by host glycans are attached at residues N46 and N61. Cystine bridges form between C128-C150 and C142-C155. Positions 238–283 (QAMGPNLVLPEQKPPSRQSQTKSKVATQKPQTNGTTPRSVAPATMS) are disordered. Residues 252 to 275 (PSRQSQTKSKVATQKPQTNGTTPR) show a composition bias toward polar residues. N270, N305, and N310 each carry an N-linked (GlcNAc...) asparagine; by host glycan. 3 disulfides stabilise this stretch: C315–C318, C315–C542, and C534–C541. The short motif at 315–318 (CWLC) is the CXXC element. 5 N-linked (GlcNAc...) asparagine; by host glycosylation sites follow: N334, N337, N377, N393, and N413. Positions 451 to 471 (ISLTVALMLGGLTVGGIAAGV) are fusion peptide. 2 coiled-coil regions span residues 479 to 528 (LETA…ILFL) and 538 to 574 (KEEC…SQQG). The immunosuppression stretch occupies residues 517–533 (LQNRRGLDILFLQGGGL). The CX6CC signature appears at 534-542 (CAALKEECC). A helical transmembrane segment spans residues 590-610 (ISSIMGPLLILLLILLFGPCI). Residue C609 is the site of S-palmitoyl cysteine; by host attachment. Over 611–645 (LNRLVQFVKDRISVVQALILTQQYQQIQQYDPDRP) the chain is Cytoplasmic.

In terms of assembly, the mature envelope protein (Env) consists of a trimer of SU-TM heterodimers attached by a labile interchain disulfide bond. Post-translationally, specific enzymatic cleavages in vivo yield mature proteins. Envelope glycoproteins are synthesized as an inactive precursor that is N-glycosylated and processed likely by host cell furin or by a furin-like protease in the Golgi to yield the mature SU and TM proteins. The cleavage site between SU and TM requires the minimal sequence [KR]-X-[KR]-R. The R-peptide is released from the C-terminus of the cytoplasmic tail of the TM protein upon particle formation as a result of proteolytic cleavage by the viral protease. Cleavage of this peptide is required for TM to become fusogenic. The CXXC motif is highly conserved across a broad range of retroviral envelope proteins. It is thought to participate in the formation of a labile disulfide bond possibly with the CX6CC motif present in the transmembrane protein. Isomerization of the intersubunit disulfide bond to an SU intrachain disulfide bond is thought to occur upon receptor recognition in order to allow membrane fusion. In terms of processing, the transmembrane protein is palmitoylated. Post-translationally, the R-peptide is palmitoylated.

It is found in the virion membrane. It localises to the host cell membrane. The surface protein (SU) attaches the virus to the host cell by binding to its receptor. This interaction triggers the refolding of the transmembrane protein (TM) and is thought to activate its fusogenic potential by unmasking its fusion peptide. Fusion occurs at the host cell plasma membrane. Functionally, the transmembrane protein (TM) acts as a class I viral fusion protein. Under the current model, the protein has at least 3 conformational states: pre-fusion native state, pre-hairpin intermediate state, and post-fusion hairpin state. During viral and target cell membrane fusion, the coiled coil regions (heptad repeats) assume a trimer-of-hairpins structure, positioning the fusion peptide in close proximity to the C-terminal region of the ectodomain. The formation of this structure appears to drive apposition and subsequent fusion of viral and target cell membranes. Membranes fusion leads to delivery of the nucleocapsid into the cytoplasm. The polypeptide is Envelope glycoprotein (env) (Feline sarcoma virus (strain SM) (Sm-FeSV)).